The chain runs to 218 residues: Calcineurin B-like protein 5 (218 aa).

EF-hand domains are found at residues 35 to 69, 70 to 105, 107 to 142, and 151 to 186; these read EVEALYDLFRKLSNSIIKDGLIHKEEFHLALFRNK, KTNLFVDRVFDLFDQKGNGVIEFDEFVRSLSVFHPD, PEEQKAGFAFKLYDLRQTGFIERHELKEMVLALLDE, and AVEMIVDRTFDQADTKGDERIDQEEWNEFVKNNPYV.

Belongs to the calcineurin regulatory subunit family. Homodimer. In terms of tissue distribution, expressed at low levels in roots, shoots, culms, leaves and young spikelets.

Its function is as follows. Acts as a calcium sensor. CBL proteins interact with CIPK serine-threonine protein kinases. Binding of a CBL protein to the regulatory NAF domain of a CIPK protein lead to the activation of the kinase in a calcium-dependent manner. In Oryza sativa subsp. japonica (Rice), this protein is Calcineurin B-like protein 5 (CBL5).